The chain runs to 2776 residues: MKLSPQQAPLYGDCVVTVLLAEEDKVEDDAIFYLIFSGSTLYHCTSTRKVSSDTLETIAPGHDCCETVKVLLCASREGLPVFVVAEEDFHFVQDEAYDAAQFLATSAGNQQALNFTRFLDRSGPPSRDVNSLDEKVALAFRHLKLPAEWNVLGTDHTLHDGGPRETLMHFAVRLGLLRLTWFLLQKPGGRGALSIHNKEGATPVSLALERGYHELHQLLTEENAGEPDSWSSLSYEIPYGDCSVRHHRELDIYTLTSESESHREPHGDSCTGHISKLMNIQQQLMKTNLKQMDNLMPLMVTAQDSSCVPSVPETDGLFLPCVPEPSDHQHPPFEETKSTLCCQRSPGRMAESSCDLSSMVEEENVICSHKKNKDVGRKGEEAEPASAMDSGSASHQDSCLQSVPDCGVKGREGLPSCGNRNEVTGTNYSGVATCQQPLSSRSSVLQDAMVTEPDACQHSSGRELPDSSSTDVGAPEKAGELEHSLLTPDATTQNNKPQVGEGTKERLENSDSSTTETTAVQVLSEPMEKADITNHVFATSAVGVNTPAEASPALSSEEIPTEKPGMETQERGCEGGTTSDQSSPVLPAAAIENKVLGGQEPDTSIAGFCKTASPLDLTMPGPSSDGMPEQNSESHARPAQSLSGQALLCSTAEAGTPSAEATHQPSTVTSSGRLEECGSGKASLPESTMVQPSTQELCTTLCPEDPQADTVTSDTVKNTQKSVGVCHLCVSDAKNQGNGLKQDTPLTNVLEDVPRLPSVVSQTEKELAPDQVSPPASSFSLASSPESESVTKDDALSLVPSQKEKGTATPQLHRTTACRDGPDGRDLSDTDKVGDGATDPPPSSAVELRTSMGNTSPVGIGGEQEGSSPTATLEVLSDSLLHNVDKAALVSDFTLPEEGVSVVVPESSTALGQDGKDRAMSCSSVKEDVHSSEMSREDQRTPPSGQEIPGLCEKPMSALCAEEKAQQHTPSACLKTETKDIKEVAPQVSLLTEGGAAKSLVPPRTSLSADSKQKASSTEQSGSSLLPSGLPGASEALHCNQPSALDVVVENTQFQGETNACEVSRSAMEDVTVADASPATAEPRKKDASHCIKDIPISELLNQEKQMTPSLPEAFLDKGVTDLQEVITPEIEPLDCKRETLEGTDLNCATSNSKETPIEKPMQPLARDLPTETGLSVINNNVPQADMKQVAQASIPAEESNATTVSTQAADVPTRADSIEETATRIVEAVIRQVRASNALMAKVETQNPSLSSPETKQLENAYTESACAFLPGETPQIEKTHEDTTGQCGAETEEPEKIILPESAPGKQGKMPDTRTGDEVDLLSRISAASEEEAVGNGAATPKMKQGPGTQAINRESWCAIEPCPEAASLLASKQSSECRSFIDVGLGTECASKEGMLQRVSGSESDLFHSPSDEMDSIIFPKPEEEQLLCDTTGSSSSTDDTASLDRHSSHGSDVSLPQTSKLNRSRNHQSANGFFSPGVEAPESRESESEPAGSGEMEEEEMDSITEVPANCSFLRSSMRSLSPFRRHSWGPGKNAASDAEMNQRSSMRALGHVVRRPPIHRRSFSLEGLTGGGVGNKPSSSLEMSSANSSELRNPFGGEEQRNSLMSLSEEHLEPDQRQHHRMFDQQTCYRSKQQGFNYCTSAISSPLTKSISLMTISHPGLDSSRPFHSTSANLTESITEENCNFLPPSPSKKNFEEKSGTKVSRTFSYIRNKMSSSKKSKEKEKEKDKIKEKEKDSKEKEKDKKTLNGHTFSPIPIVGPISCSQCMKPFTNKDAYTCAGCGAFVHKGCRENLASCAKVKMKQPKGSLQAHDTSSLPTVIMRNKSSQPKERPRSAVLLADEATAAPMFTNRRSQQSVSLSKSVSIQNITGVGNDENMSNTWKFLSHSTDSLNKICKVNESTESLTDEGVGTDMNEGQLMGDFESDSKQLEAESWSRTVDSKFLKQQKKDVVKRQEVIYELMQTELHHIRTLKIMSDVYSRGMMTDLLFEQQMVEKLFPCLDELISIHSQFFQRILERKKESLVDKSEKNFLIKRIGDVLVSQFSGESAERLKKTYGKFCGQHNQSVNYFKDLYTKDKRFQAFVKKKMSSSVVRRLGIPECILLVTQRITKYPVLFQRILQCTKDNEVEQEDLTQSLSLVKDVIGAVDSKVASYEKKVRLGEIYTKTDSKSIMRMKSGQMFAKEDLRRKKLVRDGSVFLKSTTGRLKEVQAVLLTDILVFLQEKDQKYVFASLDHKSTVISLKKLIVREVAHEEKGLFLISMGVKDPEMVEVHASSREERNSWIQIIQDTINSLNRDEDEGIPSENEEEKKLLDTKARELKEQLQQKDQQILLLLEEKEMIFRDMTECSTPLPEDCSPTHSPRVLFRSNTEEALKGGPLMKSAINEVEILQSLVSGSLGGTLGQSISSPVEQEVMAAPISLPRRAETFGGFDCHQMNASKGGEKEEGDDGQDLRRTESDSGLKKGGNGNLVFMLKRNSEQVVQSIVHLHELLSMLQGVVLQQDSYIEDQKLVLTEKVLTRSASRPSSLIEQEKQRSLEKQRQDLANLQKQQAQHLEEKRRREREWEAREQELRDREAKLAEREETVRRRQQDLERDREELQQKKGTYQCDLERLRAAQKQLEREQEQLRRDTERLSQRQMDQNLCQVSNKHGRLMRIPSFLPNSDEFSSPSAPSVTKSGSLDSELSVSPKRNSISRTQKDKGPFHILGSASQTKVPEGQSQAPSSTSTSTRLFGLSKPKEKKEKKKKSKGSRTQPGDGPASEVPAEGEEIFC.

11 disordered regions span residues 371 to 401 (KNKD…SCLQ), 452 to 518 (EPDA…TETT), 547 to 584 (PAEA…QSSP), 618 to 641 (TMPG…PAQS), 653 to 689 (EAGT…ESTM), 760 to 871 (VSQT…SPTA), 910 to 951 (ALGQ…IPGL), 995 to 1029 (GAAK…LPSG), 1431 to 1508 (LCDT…MDSI), 1527 to 1546 (PFRR…AEMN), and 1565 to 1603 (RRSF…FGGE). A compositionally biased stretch (polar residues) spans 389–401 (DSGSASHQDSCLQ). Residues 493–515 (QNNKPQVGEGTKERLENSDSSTT) are important for interaction with PRKAR2A. A compositionally biased stretch (basic and acidic residues) spans 560 to 573 (PTEKPGMETQERGC). Residues 659–672 (AEATHQPSTVTSSG) show a composition bias toward polar residues. A compositionally biased stretch (low complexity) spans 773 to 788 (SPPASSFSLASSPESE). Position 784 is a phosphoserine (Ser-784). Residue Thr-809 is modified to Phosphothreonine. 2 stretches are compositionally biased toward basic and acidic residues: residues 820–834 (DGPD…DKVG) and 914–940 (DGKD…EDQR). Position 941 is a phosphothreonine (Thr-941). Over residues 1005–1020 (TSLSADSKQKASSTEQ) the composition is skewed to polar residues. Low complexity predominate over residues 1433-1444 (DTTGSSSSTDDT). A compositionally biased stretch (polar residues) spans 1454 to 1476 (GSDVSLPQTSKLNRSRNHQSANG). Phosphoserine occurs at positions 1455, 1473, 1507, 1532, and 1569. The important for interaction with MAP2K3 stretch occupies residues 1552–1678 (RALGHVVRRP…SRPFHSTSAN (127 aa)). Over residues 1583–1594 (SSSLEMSSANSS) the composition is skewed to low complexity. Residues Ser-1608, Ser-1611, and Ser-1613 each carry the phosphoserine modification. Position 1637 is an N6-methyllysine (Lys-1637). The interval 1711–1756 (TFSYIRNKMSSSKKSKEKEKEKDKIKEKEKDSKEKEKDKKTLNGHT) is disordered. Over residues 1724–1751 (KSKEKEKEKDKIKEKEKDSKEKEKDKKT) the composition is skewed to basic and acidic residues. The Phorbol-ester/DAG-type zinc-finger motif lies at 1754 to 1801 (GHTFSPIPIVGPISCSQCMKPFTNKDAYTCAGCGAFVHKGCRENLASC). 3 positions are modified to phosphoserine: Ser-1839, Ser-1858, and Ser-1892. Residues 1882–2776 (MSNTWKFLSH…VPAEGEEIFC (895 aa)) form an interaction with ESR1 region. Thr-1893 carries the post-translational modification Phosphothreonine. Residues Ser-1895 and Ser-1908 each carry the phosphoserine modification. One can recognise a DH domain in the interval 1957–2154 (KRQEVIYELM…KDVIGAVDSK (198 aa)). A PH domain is found at 2194-2296 (KLVRDGSVFL…WIQIIQDTIN (103 aa)). A phosphoserine mark is found at Ser-2308 and Ser-2361. Residues 2308 to 2345 (SENEEEKKLLDTKARELKEQLQQKDQQILLLLEEKEMI) are a coiled coil. Residue Thr-2431 is modified to Phosphothreonine. Positions 2436–2471 (DCHQMNASKGGEKEEGDDGQDLRRTESDSGLKKGGN) are disordered. Residues 2455–2466 (QDLRRTESDSGL) show a composition bias toward basic and acidic residues. Residues Ser-2527 and Ser-2530 each carry the phosphoserine modification. The stretch at 2532 to 2646 (LIEQEKQRSL…ERLSQRQMDQ (115 aa)) forms a coiled coil. Disordered regions lie at residues 2549–2605 (ANLQ…EELQ) and 2626–2776 (EREQ…EIFC). Basic and acidic residues-rich tracts occupy residues 2558–2605 (HLEE…EELQ) and 2626–2640 (EREQ…ERLS). Composition is skewed to polar residues over residues 2641-2653 (QRQM…QVSN), 2665-2700 (LPNS…SISR), and 2713-2727 (SASQ…SQAP). Residues Ser-2673 and Ser-2692 each carry the phosphoserine modification.

In terms of assembly, interacts with the cAMP-dependent protein kinase (PKA) holoenzyme and with the regulatory subunit PRKAR2A. Interacts with RHOA. Also interacts with RHOB and RHOC. Identified in a ternary complex with RHOA and PRKAR2A. Identified in a complex with NR3C1 and RHOA. Interacts with BRAF and KSR1. Identified in a complex with BRAF and KSR1. Component of a signaling complex containing at least AKAP13, PKN1, MAPK14, ZAK and MAP2K3. Within this complex, AKAP13 interacts directly with PKN1, which in turn recruits MAPK14, MAP2K3 and ZAK. Interacts (phosphorylated form) with YWHAB and YWHAZ. Interaction with YWHAB inhibits activation of RHOA, interferes with PKN1 binding and activation of MAP kinases. Interacts with GNA12. Interacts with IKBKB. Interacts with ESR1, THRA, PPARA and NME2. Interacts (via the C-terminal domain after the PH domain) with MEF2C and RXRB. Interacts (via the C-terminal domain after the PH domain) with PRKD1. As to expression, detected in embryonic heart, limb bud, first branchial arch and forebrain (at protein level). Detected in heart. Detected in perichondrium, but not in the bone growth plate.

It is found in the cytoplasm. It localises to the cytosol. The protein resides in the cell cortex. Its subcellular location is the cytoskeleton. The protein localises to the nucleus. It is found in the membrane. In terms of biological role, scaffold protein that plays an important role in assembling signaling complexes downstream of several types of G protein-coupled receptors. Activates RHOA in response to signaling via G protein-coupled receptors via its function as Rho guanine nucleotide exchange factor. May also activate other Rho family members. Part of a kinase signaling complex that links ADRA1A and ADRA1B adrenergic receptor signaling to the activation of downstream p38 MAP kinases, such as MAPK11 and MAPK14. Part of a signaling complex that links ADRA1B signaling to the activation of RHOA and IKBKB/IKKB, leading to increased NF-kappa-B transcriptional activity. Part of a RHOA-dependent signaling cascade that mediates responses to lysophosphatidic acid (LPA), a signaling molecule that activates G-protein coupled receptors and potentiates transcriptional activation of the glucocorticoid receptor NR3C1. Part of a signaling cascade that stimulates MEF2C-dependent gene expression in response to lysophosphatidic acid (LPA). Part of a signaling pathway that activates MAPK11 and/or MAPK14 and leads to increased transcription activation of the estrogen receptors ESR1 and ESR2. Part of a signaling cascade that links cAMP and EGFR signaling to BRAF signaling and to PKA-mediated phosphorylation of KSR1, leading to the activation of downstream MAP kinases, such as MAPK1 or MAPK3. Functions as a scaffold protein that anchors cAMP-dependent protein kinase (PKA) and PRKD1. This promotes activation of PRKD1, leading to increased phosphorylation of HDAC5 and ultimately cardiomyocyte hypertrophy. Has no guanine nucleotide exchange activity on CDC42, Ras or Rac. Required for normal embryonic heart development, and in particular for normal sarcomere formation in the developing cardiomyocytes. Plays a role in cardiomyocyte growth and cardiac hypertrophy in response to activation of the beta-adrenergic receptor by phenylephrine or isoproterenol. Required for normal adaptive cardiac hypertrophy in response to pressure overload. Plays a role in osteogenesis. This Mus musculus (Mouse) protein is A-kinase anchor protein 13.